Consider the following 280-residue polypeptide: 2,3,4,5-tetrahydropyridine-2,6-dicarboxylate N-succinyltransferase (280 aa).

It belongs to the transferase hexapeptide repeat family.

The protein resides in the cytoplasm. The catalysed reaction is (S)-2,3,4,5-tetrahydrodipicolinate + succinyl-CoA + H2O = (S)-2-succinylamino-6-oxoheptanedioate + CoA. The protein operates within amino-acid biosynthesis; L-lysine biosynthesis via DAP pathway; LL-2,6-diaminopimelate from (S)-tetrahydrodipicolinate (succinylase route): step 1/3. In Methylorubrum extorquens (strain PA1) (Methylobacterium extorquens), this protein is 2,3,4,5-tetrahydropyridine-2,6-dicarboxylate N-succinyltransferase.